The primary structure comprises 357 residues: Hyaluronidase (357 aa).

A signal peptide spans 1 to 26 (MLLVTLFLFFLQALVNGDSCGSNCEK). 2 disulfide bridges follow: cysteine 45-cysteine 334 and cysteine 211-cysteine 223. 2 N-linked (GlcNAc...) asparagine glycosylation sites follow: asparagine 105 and asparagine 125. The active-site Proton donor is glutamate 135. N-linked (GlcNAc...) asparagine glycosylation is present at asparagine 153. A glycan (N-linked (GlcNAc...) asparagine) is linked at asparagine 351.

The protein belongs to the glycosyl hydrolase 56 family.

It is found in the secreted. It carries out the reaction Random hydrolysis of (1-&gt;4)-linkages between N-acetyl-beta-D-glucosamine and D-glucuronate residues in hyaluronate.. Hydrolyzes high molecular weight hyaluronic acid to produce small oligosaccharides. The polypeptide is Hyaluronidase (Vespa magnifica (Hornet)).